The chain runs to 125 residues: uncharacterized protein (125 aa).

It localises to the mitochondrion. This is an uncharacterized protein from Paramecium tetraurelia.